Here is a 254-residue protein sequence, read N- to C-terminus: tRNA (guanine-N(1)-)-methyltransferase (254 aa).

Residues Gly-114 and 134–139 (IGDYVL) each bind S-adenosyl-L-methionine.

This sequence belongs to the RNA methyltransferase TrmD family. Homodimer.

It localises to the cytoplasm. The catalysed reaction is guanosine(37) in tRNA + S-adenosyl-L-methionine = N(1)-methylguanosine(37) in tRNA + S-adenosyl-L-homocysteine + H(+). Its function is as follows. Specifically methylates guanosine-37 in various tRNAs. This chain is tRNA (guanine-N(1)-)-methyltransferase, found in Desulforamulus reducens (strain ATCC BAA-1160 / DSM 100696 / MI-1) (Desulfotomaculum reducens).